The following is a 264-amino-acid chain: Indole-3-glycerol phosphate synthase (264 aa).

Belongs to the TrpC family.

It carries out the reaction 1-(2-carboxyphenylamino)-1-deoxy-D-ribulose 5-phosphate + H(+) = (1S,2R)-1-C-(indol-3-yl)glycerol 3-phosphate + CO2 + H2O. Its pathway is amino-acid biosynthesis; L-tryptophan biosynthesis; L-tryptophan from chorismate: step 4/5. This is Indole-3-glycerol phosphate synthase from Azoarcus sp. (strain BH72).